The primary structure comprises 156 residues: MPRKGPVTRRDVLPDPIHNSKLVTRLINRLMLDGKRGVAQNILYNAFDIIQERTGRNPMEVFEEALKNVMPVLEVKARRVGGANYQVPIEVKPERRTTLGLRWMVNYSRNRGEKTMEQRLANEIMDAANNTGAAVKKREDTHKMAEANKAFAHYRW.

Belongs to the universal ribosomal protein uS7 family. In terms of assembly, part of the 30S ribosomal subunit. Contacts proteins S9 and S11.

One of the primary rRNA binding proteins, it binds directly to 16S rRNA where it nucleates assembly of the head domain of the 30S subunit. Is located at the subunit interface close to the decoding center, probably blocks exit of the E-site tRNA. The sequence is that of Small ribosomal subunit protein uS7 from Brevibacillus brevis (strain 47 / JCM 6285 / NBRC 100599).